Consider the following 284-residue polypeptide: Alpha-S1-casein (284 aa).

The first 15 residues, 1–15, serve as a signal peptide directing secretion; the sequence is MKLLILTCLVAAALA. 2 disordered regions span residues 21–44 and 78–111; these read RRNA…IVKQ and SSAE…SATE. Low complexity-rich tracts occupy residues 24-36 and 78-99; these read AVSS…NSSS and SSAE…SSSS. Phosphoserine is present on residues S79, S93, S94, S95, S96, S97, S98, and S99. Tandem repeats lie at residues 138-143, 144-149, 150-155, 156-161, 162-167, 168-173, 174-179, 180-185, 186-191, and 192-197. A 10 X 6 AA tandem repeats region spans residues 138-197; it reads LLQQASLAQQASLAQQASLAQQALLAQQPSLAQQAALAQQASLAQQASLAQQASLAQKHH.

The protein belongs to the alpha-casein family. Mammary gland specific. Secreted in milk.

The protein localises to the secreted. Functionally, important role in the capacity of milk to transport calcium phosphate. In Rattus norvegicus (Rat), this protein is Alpha-S1-casein (Csn1s1).